The sequence spans 699 residues: MRKVLLIASIVALILALFSCANPSFEPRSKAKDLASLPEIKSQGYHILFGELRDGEYTEGKILVGYNDRSEVDKIVKAVNGKVVLELPQIKVVSIKLNGMTVKQAYDKIKALALKGIRYVEPSYKRELIKPTVVKPNPDMYKIRKPGLNSTARDYGEELSNELWGLEAIGVTQQLWEEASGTNIIVAVVDTGVDGTHPDLEGQVIAGYRPAFDEELPAGTDSSYGGSHGTHVAGTIAAKKDGKGIVGVAPGAKIMPIVIFDDPALVGGNGYVGDDYVAAGIIWATDHGAKVMNHSWGGWGYSYTMKEAFDYAMEHGVVMVVSAGNNTSDSHHQYPAGYPGVIQVAALDYYGGTFRVAGFSSRSDGVSVGAPGVTILSTVPGEDSIGYEGHNENVPATNGGTYDYYQGTSMAAPHVTGVVAVLLQKFPNAKPWQIRKLLENTAFDFNGNGWDHDTGYGLVKLDAALQGPLPTQGGVEEFQVVVTDAKGNFGVPTVFVSMMRDNGSCYYAKTGPDGIARFPHIDSGTYDIFVGGPDHWDRALAPYDGESIPGGYAIALRMAEERQASFVGFGVSPDATQLNVNFNSTLQVKFSTNLSTLKDPQFVVVDPLLRGVYGRVAYARNQTYDLSLLSGQISFGIQTLLPAATDITIQGTVTLNGEDIPVYGVLKAGTTWTIIDDFGGLNLGTDSQPIYVWWTIFGQ.

Positions 1-21 (MRKVLLIASIVALILALFSCA) are cleaved as a signal peptide. A propeptide spanning residues 22–149 (NPSFEPRSKA…MYKIRKPGLN (128 aa)) is cleaved from the precursor. Glu-157 is a binding site for Ca(2+). Residues 163-465 (LWGLEAIGVT…YGLVKLDAAL (303 aa)) enclose the Peptidase S8 domain. The active-site Charge relay system is Asp-190. Residue Asp-199 coordinates Ca(2+). The active-site Charge relay system is the His-228. The Ca(2+) site is built by Lys-239, Asp-241, Lys-243, and Ile-245. Catalysis depends on Ser-409, which acts as the Charge relay system.

It belongs to the peptidase S8 family. Post-translationally, undergoes auto-proteolytic processing. Once cleaved, the propeptide can remain associated with the protease and blocks its activity. The physiological activation of fervidolysin is proposed to be achieved through the stepwise removal of the propeptide accomplished by several proteolytic cleavages that may not be autolytic.

The protein localises to the cell surface. Its activity is regulated as follows. Is inhibited by phenylmethylsulfonyl fluoride and 3,4-dichloroisocoumarin. EDTA and iodoacetate (1 to 5 mM) have only little effect on the enzyme activity. Functionally, protease able to degrade keratin into peptides. Is responsible for keratinolysis by F.pennivorans, which allows this bacterium to grow on native feathers. The polypeptide is Fervidolysin (Fervidobacterium pennivorans).